A 312-amino-acid chain; its full sequence is Olfactory receptor 6C68 (312 aa).

Residues 1 to 23 (MRKHTAITTFILLGLTEDPQLQV) lie on the Extracellular side of the membrane. The chain crosses the membrane as a helical span at residues 24–44 (LLFMFLFITYMLSVTGKLTII). Residues 45–55 (ALTMLDPHLKT) lie on the Cytoplasmic side of the membrane. A helical membrane pass occupies residues 56-76 (PMYFFLQNLSFLEISFTATCV). Residues 77–95 (PRFLYSISTGNKIITYNAC) are Extracellular-facing. Residues cysteine 95 and cysteine 177 are joined by a disulfide bond. Residues 96-116 (VIQLFFADLFGVTEFFLLATM) traverse the membrane as a helical segment. Residues 117 to 143 (SYDRYVAICKPLHYMAIMSNKVCKTMV) are Cytoplasmic-facing. A helical membrane pass occupies residues 144-164 (ICCWMAALMIILPPLSLGFHL). The Extracellular segment spans residues 165–197 (EFCDSNVINHFGCDALPILKIPCSDTSLIEQMV). The helical transmembrane segment at 198–218 (VASAVLTFIITLVCVVLSYTY) threads the bilayer. At 219–239 (IIRTILKFPSVQQKKKAFSTC) the chain is on the cytoplasmic side. Residues 240–260 (SSHITVVSITYGSCIFIYIKP) form a helical membrane-spanning segment. Residues 261–271 (SAKEEVNINKG) lie on the Extracellular side of the membrane. The helical transmembrane segment at 272–292 (VSVLISSISPMLNSFIYTLRN) threads the bilayer. The Cytoplasmic portion of the chain corresponds to 293 to 312 (EQVKQAFHDSLKKIAFRLKK).

Belongs to the G-protein coupled receptor 1 family.

Its subcellular location is the cell membrane. Its function is as follows. Odorant receptor. This is Olfactory receptor 6C68 (OR6C68) from Homo sapiens (Human).